We begin with the raw amino-acid sequence, 234 residues long: Probable pectate lyase F (234 aa).

A signal peptide spans Met1–Ala17. The N-linked (GlcNAc...) asparagine glycan is linked to Asn168.

It belongs to the polysaccharide lyase 3 family. Ca(2+) is required as a cofactor.

Its subcellular location is the secreted. It carries out the reaction Eliminative cleavage of (1-&gt;4)-alpha-D-galacturonan to give oligosaccharides with 4-deoxy-alpha-D-galact-4-enuronosyl groups at their non-reducing ends.. Pectinolytic enzyme consist of four classes of enzymes: pectin lyase, polygalacturonase, pectin methylesterase and rhamnogalacturonase. Among pectinolytic enzymes, pectin lyase is the most important in depolymerization of pectin, since it cleaves internal glycosidic bonds of highly methylated pectins. Favors pectate, the anion, over pectin, the methyl ester. The polypeptide is Probable pectate lyase F (plyF) (Aspergillus terreus (strain NIH 2624 / FGSC A1156)).